A 156-amino-acid polypeptide reads, in one-letter code: Putative thymidylate kinase (156 aa).

7 to 14 (GLDGTGKT) contacts ATP.

It belongs to the thymidylate kinase family.

It catalyses the reaction dTMP + ATP = dTDP + ADP. The protein operates within pyrimidine metabolism; dTTP biosynthesis. Its function is as follows. Catalyzes the conversion of dTMP to dTDP. This chain is Putative thymidylate kinase, found in Acidianus convivator (ABV).